Reading from the N-terminus, the 232-residue chain is Lipoprotein-releasing system ATP-binding protein LolD (232 aa).

The ABC transporter domain maps to 6-231 (ISCENLNKVY…KLTIKESQHV (226 aa)). Residue 42-49 (GSSGSGKS) participates in ATP binding.

Belongs to the ABC transporter superfamily. Lipoprotein translocase (TC 3.A.1.125) family. The complex is composed of two ATP-binding proteins (LolD) and two transmembrane proteins (LolC and LolE).

Its subcellular location is the cell inner membrane. Part of the ABC transporter complex LolCDE involved in the translocation of mature outer membrane-directed lipoproteins, from the inner membrane to the periplasmic chaperone, LolA. Responsible for the formation of the LolA-lipoprotein complex in an ATP-dependent manner. This chain is Lipoprotein-releasing system ATP-binding protein LolD, found in Pseudoalteromonas translucida (strain TAC 125).